The primary structure comprises 329 residues: BTB/POZ domain-containing protein At1g55760 (329 aa).

In terms of domain architecture, BTB spans 164-231 (TDITINASDG…IYGNIQNEDF (68 aa)).

The protein operates within protein modification; protein ubiquitination. In terms of biological role, may act as a substrate-specific adapter of an E3 ubiquitin-protein ligase complex (CUL3-RBX1-BTB) which mediates the ubiquitination and subsequent proteasomal degradation of target proteins. The sequence is that of BTB/POZ domain-containing protein At1g55760 from Arabidopsis thaliana (Mouse-ear cress).